Consider the following 202-residue polypeptide: Probable septum site-determining protein MinC (202 aa).

It belongs to the MinC family. In terms of assembly, interacts with MinD and FtsZ.

Its function is as follows. Cell division inhibitor that blocks the formation of polar Z ring septums. Rapidly oscillates between the poles of the cell to destabilize FtsZ filaments that have formed before they mature into polar Z rings. Prevents FtsZ polymerization. This chain is Probable septum site-determining protein MinC, found in Dictyoglomus turgidum (strain DSM 6724 / Z-1310).